A 457-amino-acid polypeptide reads, in one-letter code: PDZ and LIM domain protein 7 (457 aa).

One can recognise a PDZ domain in the interval 1–85 (MDSFKVVLEG…RLSLGLSRAQ (85 aa)). Residue Ser78 is modified to Phosphoserine. Disordered regions lie at residues 81-132 (LSRA…LSQN) and 186-226 (FMKK…PWAV). Thr96 carries the phosphothreonine modification. Arg103 is modified (asymmetric dimethylarginine). Residue Ser111 is modified to Phosphoserine. At Ser247 the chain carries Phosphoserine. 3 LIM zinc-binding domains span residues 280-338 (PVCH…VRYA), 339-398 (PSCA…MFGT), and 399-457 (KCRG…FSHV).

In terms of assembly, binds via its LIM zinc-binding 3 domain (LIM 3) domain to endocytic codes of INSR, but not with those of IGF1R, LDLR, TFRC, or EGFR. Interacts with various PKC isoforms through the LIM zinc-binding domains. Binds to RET in a phosphorylation-independent manner via its LIM zinc-binding 2 domain (LIM 2). Probably part of a complex with SHC and the RET dimer. Interacts with TPM2, TBX4 and TBX5. Interacts (via LIM domains) with SIPA1L1. In terms of tissue distribution, expressed in kidney, heart, brain, lung, and skeletal muscle. Overexpression results in the synthesis of an unidentified soluble factor which acts on cells in the osteoblast lineage causing them to differentiate and secrete BMP-2.

The protein localises to the cytoplasm. It localises to the cytoskeleton. Functionally, may function as a scaffold on which the coordinated assembly of proteins can occur. May play a role as an adapter that, via its PDZ domain, localizes LIM-binding proteins to actin filaments of both skeletal muscle and nonmuscle tissues. Involved in both of the two fundamental mechanisms of bone formation, direct bone formation (e.g. embryonic flat bones mandible and cranium), and endochondral bone formation (e.g. embryonic long bone development). Plays a role during fracture repair. Involved in BMP6 signaling pathway. This Rattus norvegicus (Rat) protein is PDZ and LIM domain protein 7 (Pdlim7).